The chain runs to 197 residues: uncharacterized protein (197 aa).

Residues 1-31 (MMHFRKKSSISNTSDHDGANRASDVKISEDD) form a disordered region. 2 positions are modified to phosphoserine: Ser-11 and Ser-23. The segment covering 14-31 (SDHDGANRASDVKISEDD) has biased composition (basic and acidic residues). Glycyl lysine isopeptide (Lys-Gly) (interchain with G-Cter in ubiquitin) cross-links involve residues Lys-26 and Lys-32. The segment at 157-197 (VGGASSQMYGEQAVYQPQQHVQTEEKQKKKKKGLFGRMKKK) is disordered. The span at 158–177 (GGASSQMYGEQAVYQPQQHV) shows a compositional bias: polar residues. The span at 184–197 (KKKKKGLFGRMKKK) shows a compositional bias: basic residues.

It to yeast YGR273c.

This is an uncharacterized protein from Saccharomyces cerevisiae (strain ATCC 204508 / S288c) (Baker's yeast).